The primary structure comprises 256 residues: Chalcone--flavanone isomerase (256 aa).

3 residues coordinate substrate: Thr51, Asn116, and Ser193. The interval 219–256 is disordered; the sequence is NSTTDLNESENEKLNSNEVSKEEKPLQVEKSAFKEVEV. Residues 228 to 256 show a composition bias toward basic and acidic residues; that stretch reads ENEKLNSNEVSKEEKPLQVEKSAFKEVEV.

This sequence belongs to the chalcone isomerase family. In terms of tissue distribution, nodules.

The enzyme catalyses a chalcone = a flavanone.. It functions in the pathway secondary metabolite biosynthesis; flavonoid biosynthesis. Catalyzes the intramolecular cyclization of bicyclic chalcones into tricyclic (S)-flavanones. Responsible for the isomerization of 4,2',4',6'-tetrahydroxychalcone (also termed chalcone) into naringenin. The polypeptide is Chalcone--flavanone isomerase (CHI) (Elaeagnus umbellata (Autumn olive)).